Consider the following 386-residue polypeptide: ADP,ATP carrier protein 1, mitochondrial (386 aa).

The N-terminal 76 residues, methionine 1–glutamine 76, are a transit peptide targeting the mitochondrion. 3 Solcar repeats span residues serine 84–leucine 177, lysine 189–valine 281, and aspartate 289–isoleucine 375. A run of 5 helical transmembrane segments spans residues phenylalanine 86–leucine 113, threonine 154–phenylalanine 178, tyrosine 187–leucine 207, phenylalanine 257–leucine 278, and phenylalanine 292–isoleucine 312. ADP-binding residues include arginine 159 and lysine 171. Position 316 (arginine 316) interacts with ADP. Positions arginine 316–methionine 321 are important for transport activity. Residues arginine 316–methionine 321 carry the Nucleotide carrier signature motif motif. A helical transmembrane segment spans residues alanine 352–leucine 372.

The protein belongs to the mitochondrial carrier (TC 2.A.29) family. As to quaternary structure, monomer.

The protein resides in the mitochondrion inner membrane. It carries out the reaction ADP(in) + ATP(out) = ADP(out) + ATP(in). The matrix-open state (m-state) is inhibited by the membrane-permeable bongkrekic acid (BKA). The cytoplasmic-open state (c-state) is inhibited by the membrane-impermeable toxic inhibitor carboxyatractyloside (CATR). Its function is as follows. ADP:ATP antiporter that mediates import of ADP into the mitochondrial matrix for ATP synthesis, and export of ATP out to fuel the cell. Cycles between the cytoplasmic-open state (c-state) and the matrix-open state (m-state): operates by the alternating access mechanism with a single substrate-binding site intermittently exposed to either the cytosolic (c-state) or matrix (m-state) side of the inner mitochondrial membrane. This is ADP,ATP carrier protein 1, mitochondrial (ANT1) from Gossypium hirsutum (Upland cotton).